We begin with the raw amino-acid sequence, 576 residues long: Zinc finger protein 791 (576 aa).

The 87-residue stretch at 4 to 90 (VAFEDVSVSF…AENFSPNLSV (87 aa)) folds into the KRAB domain. C2H2-type zinc fingers lie at residues 100-122 (YECT…MRSH), 132-154 (YKCK…ERSH), 160-182 (YKCK…ERTH), 188-210 (YECK…ERIH), 216-238 (YECK…ERTH), 244-266 (YACK…MITH), 272-294 (YKCK…ERIH), 300-322 (YKCK…ERIH), 328-350 (YKCK…VRVH), 356-378 (YKCK…ERTH), 384-406 (YECK…KRNH), 412-434 (YECK…MITH), 440-462 (YKCR…ERTH), 468-490 (YECK…KRTH), 496-518 (YECK…MRMH), 524-546 (YKCK…TRIH), and 552-574 (LECK…MRMH).

The protein belongs to the krueppel C2H2-type zinc-finger protein family.

It localises to the nucleus. May be involved in transcriptional regulation. This is Zinc finger protein 791 (ZNF791) from Homo sapiens (Human).